We begin with the raw amino-acid sequence, 440 residues long: Protein OSB3, chloroplastic/mitochondrial (440 aa).

The N-terminal 61 residues, 1-61, are a transit peptide targeting the chloroplast and mitochondrion; sequence MNLISRTLTR…AKVSVKPPLN (61 aa). The 99-residue stretch at 80 to 178 folds into the SSB domain; that stretch reads ISNWINLIGF…VMVQNLNFVQ (99 aa). PDF region stretches follow at residues 218–270, 294–342, and 380–428; these read WKHL…LKLE, WKDL…SKLP, and WKNL…SKLP.

Expressed primarily in the female gametophyte and in the floral abscission zone.

Its subcellular location is the mitochondrion. It localises to the plastid. The protein localises to the chloroplast. Functionally, binds single-stranded DNA. This is Protein OSB3, chloroplastic/mitochondrial (OSB3) from Arabidopsis thaliana (Mouse-ear cress).